Consider the following 396-residue polypeptide: Elongation factor Tu (396 aa).

The tr-type G domain maps to 10 to 205; it reads KEHVNIGTIG…AVDNYIETPV (196 aa). The segment at 19-26 is G1; that stretch reads GHVDHGKT. Position 19 to 26 (19 to 26) interacts with GTP; the sequence is GHVDHGKT. Mg(2+) is bound at residue T26. A G2 region spans residues 60 to 64; it reads GITIN. A G3 region spans residues 81 to 84; that stretch reads DCPG. Residues 81–85 and 136–139 each bind GTP; these read DCPGH and NKVD. Positions 136–139 are G4; sequence NKVD. Residues 175–177 are G5; sequence SAL.

This sequence belongs to the TRAFAC class translation factor GTPase superfamily. Classic translation factor GTPase family. EF-Tu/EF-1A subfamily. As to quaternary structure, monomer.

It is found in the cytoplasm. It carries out the reaction GTP + H2O = GDP + phosphate + H(+). Functionally, GTP hydrolase that promotes the GTP-dependent binding of aminoacyl-tRNA to the A-site of ribosomes during protein biosynthesis. The polypeptide is Elongation factor Tu (Mycoplasmopsis pulmonis (strain UAB CTIP) (Mycoplasma pulmonis)).